We begin with the raw amino-acid sequence, 358 residues long: UDP-3-O-acylglucosamine N-acyltransferase (358 aa).

The active-site Proton acceptor is His-248.

The protein belongs to the transferase hexapeptide repeat family. LpxD subfamily. Homotrimer.

It catalyses the reaction a UDP-3-O-[(3R)-3-hydroxyacyl]-alpha-D-glucosamine + a (3R)-hydroxyacyl-[ACP] = a UDP-2-N,3-O-bis[(3R)-3-hydroxyacyl]-alpha-D-glucosamine + holo-[ACP] + H(+). It functions in the pathway bacterial outer membrane biogenesis; LPS lipid A biosynthesis. Catalyzes the N-acylation of UDP-3-O-acylglucosamine using 3-hydroxyacyl-ACP as the acyl donor. Is involved in the biosynthesis of lipid A, a phosphorylated glycolipid that anchors the lipopolysaccharide to the outer membrane of the cell. The chain is UDP-3-O-acylglucosamine N-acyltransferase from Synechococcus sp. (strain WH7803).